Reading from the N-terminus, the 301-residue chain is Syntaxin-17 (301 aa).

The residue at position 2 (S2) is an N-acetylserine. Residues 2 to 227 lie on the Cytoplasmic side of the membrane; it reads SEDEEKVKLR…KNLQKAAKYK (226 aa). K41 carries the post-translational modification N6-acetyllysine. The stretch at 49 to 128 forms a coiled coil; that stretch reads DKLHEEHINA…QVNDEELLQP (80 aa). At Y156 the chain carries Phosphotyrosine; by ABL1. Residues 161 to 223 enclose the t-SNARE coiled-coil homology domain; it reads IPQDQNAAES…EEGTKNLQKA (63 aa). Residues 228 to 248 traverse the membrane as a helical segment; sequence LAALPVAGALIGGVVGGPIGL. Residues 228-274 are necessary and sufficient for localization to autophagosome; the sequence is LAALPVAGALIGGVVGGPIGLLAGFKVAGIAAALGGGVLGFTGGKLI. Over 249–253 the chain is Lumenal; sequence LAGFK. A helical transmembrane segment spans residues 254 to 274; sequence VAGIAAALGGGVLGFTGGKLI. Over 275 to 301 the chain is Cytoplasmic; it reads QRRKQKMMEKLTSSCPDLPSQSDKKRS. The residue at position 288 (S288) is a Phosphoserine. The Endoplasmic reticulum retention signal motif lies at 298–301; that stretch reads KKRS.

It belongs to the syntaxin family. In terms of assembly, forms a SNARE complex composed of VAMP8, SNAP29 and STX17 involved in fusion of autophagosome with lysosome. May interact with VTI1B. Probably interacts with BET1, SCFD1 and SEC22B. Interacts with PTPN2 and ABL1; involved in STX17 phosphorylation. Interacts with COPB1. Interacts with TMED9 and TMED10; the interaction is direct. Interacts with VAMP7. Interacts with RUBCNL/PACER; promoting targeting of RUBCNL/PACER to autophagosome. Interacts with VAMP8, SNAP29, VPS39 and VPS41; these interactions are increased in the absence of TMEM39A. Interacts with IRGM; promoting STX17 recruitment to autophagosomes. Interacts with ATG8 proteins GABARAP and MAP1LC3B. Interacts with RNF115; this interaction enhances STX17 stability which in turn promotes autophagosome maturation. Interacts with RAB39A (GTP-bound); the interaction promotes autophagosome-lysosome membrane fusion driven by STX17-SNAP29-VAMP8. Interacts with RAB39B; the interaction may promote a different fonction in autophagy as compared with RAB39A. In terms of processing, dephosphorylation by PTPN2; regulates exit from the endoplasmic reticulum. Phosphorylated at Tyr-156 probably by ABL1.

The protein resides in the endoplasmic reticulum membrane. Its subcellular location is the smooth endoplasmic reticulum membrane. The protein localises to the endoplasmic reticulum-Golgi intermediate compartment membrane. It localises to the cytoplasmic vesicle. It is found in the autophagosome membrane. The protein resides in the COPII-coated vesicle membrane. Its subcellular location is the cytoplasm. The protein localises to the cytosol. It localises to the mitochondrion membrane. It is found in the autolysosome membrane. Its function is as follows. SNAREs, soluble N-ethylmaleimide-sensitive factor-attachment protein receptors, are essential proteins for fusion of cellular membranes. SNAREs localized on opposing membranes assemble to form a trans-SNARE complex, an extended, parallel four alpha-helical bundle that drives membrane fusion. STX17 is a SNARE of the autophagosome involved in autophagy through the direct control of autophagosome membrane fusion with the lysosome membrane. May also play a role in the early secretory pathway where it may maintain the architecture of the endoplasmic reticulum-Golgi intermediate compartment/ERGIC and Golgi and/or regulate transport between the endoplasmic reticulum, the ERGIC and the Golgi. The protein is Syntaxin-17 of Mus musculus (Mouse).